Here is a 239-residue protein sequence, read N- to C-terminus: MTENNAKKEQVHTVFQNISSKYDRLNNIISFEQHKVWRKHVMKDMHVKVGSKALDVCCGTADWTIALSKAVGAHGEVTGLDFSENMLEVGKEKTKHMNNIHLVHGDAMNLPFEDNSFDYVTIGFGLRNVPDYLVALKEMNRVLKPGGMIVCLETSQPTMPVFKQVYKLYFKFVMPVFGKLFAKSKEEYEWLQQSTFDFPDKDKLKQLFEQAGFNKIKIRSFTGGVAAMHLGYKQKSSTK.

Residues Thr-60, Asp-81, and 106 to 107 (DA) each bind S-adenosyl-L-methionine.

The protein belongs to the class I-like SAM-binding methyltransferase superfamily. MenG/UbiE family.

It catalyses the reaction a 2-demethylmenaquinol + S-adenosyl-L-methionine = a menaquinol + S-adenosyl-L-homocysteine + H(+). It functions in the pathway quinol/quinone metabolism; menaquinone biosynthesis; menaquinol from 1,4-dihydroxy-2-naphthoate: step 2/2. Methyltransferase required for the conversion of demethylmenaquinol (DMKH2) to menaquinol (MKH2). This is Demethylmenaquinone methyltransferase from Staphylococcus haemolyticus (strain JCSC1435).